The primary structure comprises 445 residues: Phosphoglucosamine mutase (445 aa).

Serine 102 functions as the Phosphoserine intermediate in the catalytic mechanism. Mg(2+) is bound by residues serine 102, aspartate 241, aspartate 243, and aspartate 245. Serine 102 carries the phosphoserine modification.

It belongs to the phosphohexose mutase family. The cofactor is Mg(2+). Post-translationally, activated by phosphorylation.

It catalyses the reaction alpha-D-glucosamine 1-phosphate = D-glucosamine 6-phosphate. Catalyzes the conversion of glucosamine-6-phosphate to glucosamine-1-phosphate. The polypeptide is Phosphoglucosamine mutase (Zymomonas mobilis subsp. mobilis (strain ATCC 31821 / ZM4 / CP4)).